Consider the following 646-residue polypeptide: Cysteine-rich receptor-like protein kinase 37 (646 aa).

The first 26 residues, 1-26 (MGKSCVVTSSFSLLLLFLQTLKYVHA), serve as a signal peptide directing secretion. Gnk2-homologous domains lie at 27 to 132 (GFIC…NHST) and 142 to 252 (TINP…LYPY). The Extracellular segment spans residues 27–287 (GFICYGDFFN…RDEKSFQGSN (261 aa)). 4 N-linked (GlcNAc...) asparagine glycosylation sites follow: Asn62, Asn129, Asn169, and Asn180. Residues 288-308 (IAIIVVPSVINLIIFVVLIFS) form a helical membrane-spanning segment. At 309 to 646 (WKRKQSHTII…LTRPSLSLGH (338 aa)) the chain is on the cytoplasmic side. Residues 345 to 626 (FSLENKLGQG…LFWLERHATI (282 aa)) form the Protein kinase domain. ATP is bound by residues 351–359 (LGQGGFGSV) and Lys373. At Tyr418 the chain carries Phosphotyrosine. Catalysis depends on Asp470, which acts as the Proton acceptor. Position 474 is a phosphoserine (Ser474). At Thr510 the chain carries Phosphothreonine. A Phosphotyrosine modification is found at Tyr518.

The protein belongs to the protein kinase superfamily. Ser/Thr protein kinase family. CRK subfamily.

It is found in the membrane. The enzyme catalyses L-seryl-[protein] + ATP = O-phospho-L-seryl-[protein] + ADP + H(+). It catalyses the reaction L-threonyl-[protein] + ATP = O-phospho-L-threonyl-[protein] + ADP + H(+). The protein is Cysteine-rich receptor-like protein kinase 37 (CRK37) of Arabidopsis thaliana (Mouse-ear cress).